A 358-amino-acid polypeptide reads, in one-letter code: Phosphoserine aminotransferase (358 aa).

Arginine 41 lines the L-glutamate pocket. Residues 75 to 76 (AS), tryptophan 100, threonine 148, aspartate 167, and glutamine 190 each bind pyridoxal 5'-phosphate. At lysine 191 the chain carries N6-(pyridoxal phosphate)lysine. 233–234 (NT) is a pyridoxal 5'-phosphate binding site.

It belongs to the class-V pyridoxal-phosphate-dependent aminotransferase family. SerC subfamily. As to quaternary structure, homodimer. Pyridoxal 5'-phosphate is required as a cofactor.

The protein localises to the cytoplasm. It catalyses the reaction O-phospho-L-serine + 2-oxoglutarate = 3-phosphooxypyruvate + L-glutamate. The enzyme catalyses 4-(phosphooxy)-L-threonine + 2-oxoglutarate = (R)-3-hydroxy-2-oxo-4-phosphooxybutanoate + L-glutamate. Its pathway is amino-acid biosynthesis; L-serine biosynthesis; L-serine from 3-phospho-D-glycerate: step 2/3. It functions in the pathway cofactor biosynthesis; pyridoxine 5'-phosphate biosynthesis; pyridoxine 5'-phosphate from D-erythrose 4-phosphate: step 3/5. In terms of biological role, catalyzes the reversible conversion of 3-phosphohydroxypyruvate to phosphoserine and of 3-hydroxy-2-oxo-4-phosphonooxybutanoate to phosphohydroxythreonine. The polypeptide is Phosphoserine aminotransferase (Campylobacter jejuni subsp. jejuni serotype O:2 (strain ATCC 700819 / NCTC 11168)).